We begin with the raw amino-acid sequence, 208 residues long: Uridine kinase (208 aa).

An ATP-binding site is contributed by glycine 12–threonine 19.

Belongs to the uridine kinase family.

It is found in the cytoplasm. It carries out the reaction uridine + ATP = UMP + ADP + H(+). The catalysed reaction is cytidine + ATP = CMP + ADP + H(+). It participates in pyrimidine metabolism; CTP biosynthesis via salvage pathway; CTP from cytidine: step 1/3. It functions in the pathway pyrimidine metabolism; UMP biosynthesis via salvage pathway; UMP from uridine: step 1/1. The sequence is that of Uridine kinase from Streptococcus pyogenes serotype M3 (strain ATCC BAA-595 / MGAS315).